The primary structure comprises 556 residues: MQTDIQIAQRCKMHHIADIAKNLGIDTEDIEFYGNYKAKLSDKLWDKVKNKKDGKLVLVTAINPTPAGEGKTTTTVGLGQAMARIGKNAVIALREPSMGPVMGIKGGAAGGGYAQVVPMEDINLHFTGDMHAITAANNLLSAAIDNHLQQGNMLNIDSRQIVWKRCMDMNDRALRNVIVGLGGKINGVPREDGFNITVASEIMAILCLALDIKDLKKRLGRIIIGYTYEGKPVTAHDLKVDGAMTLLLKDAIKPNLVQTLEGTPALMHGGPFANIAHGCNSISATKLALKLSDYVITEAGFGADLGAEKFFDIKCRFAGFKPDAVVLVATIRALKYNGGVRKEDLKEENIDALSKGFANAEKHIENLKQFGVPVMVAINHFDTDTEAEIKLIQEKCSSLGVEVAFSDVFLKGGEGGIELAEKLVALTDSTVSNFAPIYDEKLPIKEKVQQIVSKIYGGRNVIYNAAAEKSIAKIEEMGLDRLPICMAKTQYSLSDNPALLGRPQDFDVTVKEVRISAGAGFLVVLTGDIMTMPGLPKVPAAERIDINESGVITGLF.

65–72 (TPAGEGKT) is an ATP binding site.

This sequence belongs to the formate--tetrahydrofolate ligase family.

The enzyme catalyses (6S)-5,6,7,8-tetrahydrofolate + formate + ATP = (6R)-10-formyltetrahydrofolate + ADP + phosphate. Its pathway is one-carbon metabolism; tetrahydrofolate interconversion. This is Formate--tetrahydrofolate ligase from Ruminiclostridium cellulolyticum (strain ATCC 35319 / DSM 5812 / JCM 6584 / H10) (Clostridium cellulolyticum).